The chain runs to 142 residues: Neuritin (142 aa).

Positions 1–27 are cleaved as a signal peptide; sequence MGLKLNGRYISLILAVQIAYLVQAVRA. Gly116 is lipidated: GPI-anchor amidated glycine. The propeptide at 117 to 142 is removed in mature form; it reads AAGSLLPALSVLLVSLSAALATWFSF.

It belongs to the neuritin family. Component of the outer core of AMPAR complex. AMPAR complex consists of an inner core made of 4 pore-forming GluA/GRIA proteins (GRIA1, GRIA2, GRIA3 and GRIA4) and 4 major auxiliary subunits arranged in a twofold symmetry. One of the two pairs of distinct binding sites is occupied either by CNIH2, CNIH3 or CACNG2, CACNG3. The other harbors CACNG2, CACNG3, CACNG4, CACNG8 or GSG1L. This inner core of AMPAR complex is complemented by outer core constituents binding directly to the GluA/GRIA proteins at sites distinct from the interaction sites of the inner core constituents. Outer core constituents include at least PRRT1, PRRT2, CKAMP44/SHISA9, FRRS1L and NRN1. The proteins of the inner and outer core serve as a platform for other, more peripherally associated AMPAR constituents. Alone or in combination, these auxiliary subunits control the gating and pharmacology of the AMPAR complex and profoundly impact their biogenesis and protein processing. In terms of tissue distribution, expressed in the brain (at protein level).

The protein localises to the cell membrane. The protein resides in the synapse. Functionally, promotes neurite outgrowth and especially branching of neuritic processes in primary hippocampal and cortical cells. The protein is Neuritin (Nrn1) of Mus musculus (Mouse).